A 223-amino-acid polypeptide reads, in one-letter code: UPF0502 protein Sbal223_2520 (223 aa).

The protein belongs to the UPF0502 family.

The polypeptide is UPF0502 protein Sbal223_2520 (Shewanella baltica (strain OS223)).